We begin with the raw amino-acid sequence, 246 residues long: Proteasome subunit alpha (246 aa).

The protein belongs to the peptidase T1A family. The 20S proteasome core is composed of 14 alpha and 14 beta subunits that assemble into four stacked heptameric rings, resulting in a barrel-shaped structure. The two inner rings, each composed of seven catalytic beta subunits, are sandwiched by two outer rings, each composed of seven alpha subunits. The catalytic chamber with the active sites is on the inside of the barrel. Has a gated structure, the ends of the cylinder being occluded by the N-termini of the alpha-subunits. Is capped by the proteasome-associated ATPase, ARC. Can also interact with the bacterial proteasome activator Bpa through the C-terminal hydrophobic-tyrosine-X motif (HbYX motif) of Bpa; Bpa forms a homooligomeric ring-like structure which stacks co-axially with the proteasomal alpha-rings. Pupylated at an undetermined lysine residue by the prokaryotic ubiquitin-like protein Pup with the help of the ligase PafA, which leads to its degradation by the proteasome and thereby constitutes a negative auto-regulation.

Its subcellular location is the cytoplasm. The protein operates within protein degradation; proteasomal Pup-dependent pathway. The formation of the proteasomal ATPase ARC-20S proteasome complex, likely via the docking of the C-termini of ARC into the intersubunit pockets in the alpha-rings, may trigger opening of the gate for substrate entry. Interconversion between the open-gate and close-gate conformations leads to a dynamic regulation of the 20S proteasome proteolysis activity. PPS auto-regulates its own activity via pupylation and degradation of its components. Peptidolytic activity is inhibited by N-acetyl-Leu-Leu-norleucinal (Ac-LLnL) in vitro. Functionally, component of the proteasome core, a large protease complex with broad specificity involved in protein degradation. The M.smegmatis proteasome is able to cleave oligopeptides after hydrophobic residues, thus displaying chymotrypsin-like activity. In complex with the ATPase Mpa, degrades protein targets conjugated to a prokaryotic ubiquitin-like protein (Pup). Identified substrates of the M.smegmatis proteasome are the pupylated SodA and Ino1 proteins. The Pup-proteasome system (PPS) is essential for survival under starvation; PPS likely functions to recycle amino acids under nitrogen starvation, thereby enabling the cell to maintain basal metabolic activities. The protein is Proteasome subunit alpha of Mycolicibacterium smegmatis (strain ATCC 700084 / mc(2)155) (Mycobacterium smegmatis).